The sequence spans 334 residues: Ketol-acid reductoisomerase (NADP(+)) (334 aa).

Residues 1-181 enclose the KARI N-terminal Rossmann domain; it reads MTTVYYDQSV…GATRAGVLET (181 aa). NADP(+) is bound by residues 25–28, R48, S52, and 82–85; these read YGSQ and DEIQ. Residue H107 is part of the active site. G133 is a binding site for NADP(+). In terms of domain architecture, KARI C-terminal knotted spans 182-327; sequence SFKEETETDL…RELRDMMPFI (146 aa). Residues D190, E194, E226, and E230 each coordinate Mg(2+). S251 contacts substrate.

The protein belongs to the ketol-acid reductoisomerase family. The cofactor is Mg(2+).

The catalysed reaction is (2R)-2,3-dihydroxy-3-methylbutanoate + NADP(+) = (2S)-2-acetolactate + NADPH + H(+). The enzyme catalyses (2R,3R)-2,3-dihydroxy-3-methylpentanoate + NADP(+) = (S)-2-ethyl-2-hydroxy-3-oxobutanoate + NADPH + H(+). The protein operates within amino-acid biosynthesis; L-isoleucine biosynthesis; L-isoleucine from 2-oxobutanoate: step 2/4. It participates in amino-acid biosynthesis; L-valine biosynthesis; L-valine from pyruvate: step 2/4. In terms of biological role, involved in the biosynthesis of branched-chain amino acids (BCAA). Catalyzes an alkyl-migration followed by a ketol-acid reduction of (S)-2-acetolactate (S2AL) to yield (R)-2,3-dihydroxy-isovalerate. In the isomerase reaction, S2AL is rearranged via a Mg-dependent methyl migration to produce 3-hydroxy-3-methyl-2-ketobutyrate (HMKB). In the reductase reaction, this 2-ketoacid undergoes a metal-dependent reduction by NADPH to yield (R)-2,3-dihydroxy-isovalerate. The polypeptide is Ketol-acid reductoisomerase (NADP(+)) (Staphylococcus saprophyticus subsp. saprophyticus (strain ATCC 15305 / DSM 20229 / NCIMB 8711 / NCTC 7292 / S-41)).